The primary structure comprises 462 residues: tRNA-2-methylthio-N(6)-dimethylallyladenosine synthase (462 aa).

The 117-residue stretch at 28–144 (KKLFVKTYGC…LPKMMEAVNA (117 aa)) folds into the MTTase N-terminal domain. [4Fe-4S] cluster-binding residues include cysteine 37, cysteine 73, cysteine 107, cysteine 181, cysteine 185, and cysteine 188. In terms of domain architecture, Radical SAM core spans 167-398 (ATRGPTAFLT…QALLTQQQRA (232 aa)). The 62-residue stretch at 401-462 (DAMVGRRVKV…KTNSLTGRLV (62 aa)) folds into the TRAM domain.

It belongs to the methylthiotransferase family. MiaB subfamily. As to quaternary structure, monomer. Requires [4Fe-4S] cluster as cofactor.

It localises to the cytoplasm. The enzyme catalyses N(6)-dimethylallyladenosine(37) in tRNA + (sulfur carrier)-SH + AH2 + 2 S-adenosyl-L-methionine = 2-methylsulfanyl-N(6)-dimethylallyladenosine(37) in tRNA + (sulfur carrier)-H + 5'-deoxyadenosine + L-methionine + A + S-adenosyl-L-homocysteine + 2 H(+). Catalyzes the methylthiolation of N6-(dimethylallyl)adenosine (i(6)A), leading to the formation of 2-methylthio-N6-(dimethylallyl)adenosine (ms(2)i(6)A) at position 37 in tRNAs that read codons beginning with uridine. The chain is tRNA-2-methylthio-N(6)-dimethylallyladenosine synthase from Jannaschia sp. (strain CCS1).